Consider the following 261-residue polypeptide: Ribosome biogenesis protein nsa2 (261 aa).

2 stretches are compositionally biased toward basic and acidic residues: residues Met-1–Ser-36 and Lys-66–Pro-82. Disordered regions lie at residues Met-1–Gly-44 and Ala-64–Thr-97. Positions Gly-15–Glu-22 match the Nuclear localization signal motif.

The protein belongs to the eukaryotic ribosomal protein eS8 family. Ribosome biogenesis protein NSA2 subfamily. As to quaternary structure, component of the pre-66S ribosomal particle. Interacts with nop7 and rrp1. Interacts with rsa4 (via WD repeats).

Its subcellular location is the nucleus. The protein resides in the nucleolus. Involved in the biogenesis of the 60S ribosomal subunit. May play a part in the quality control of pre-60S particles. This chain is Ribosome biogenesis protein nsa2 (rbg-52), found in Neurospora crassa (strain ATCC 24698 / 74-OR23-1A / CBS 708.71 / DSM 1257 / FGSC 987).